We begin with the raw amino-acid sequence, 77 residues long: MISKEKIARINELAQKAKSNTITDEEKAEQQKLRQEYLKGFRSSMKNTLKSVKVIDPEGNDVTPEKLKREQQKNNLH.

A disordered region spans residues 55-77 (IDPEGNDVTPEKLKREQQKNNLH). Over residues 63-77 (TPEKLKREQQKNNLH) the composition is skewed to basic and acidic residues.

This sequence belongs to the UPF0291 family.

Its subcellular location is the cytoplasm. The chain is UPF0291 protein RBAM_017680 from Bacillus velezensis (strain DSM 23117 / BGSC 10A6 / LMG 26770 / FZB42) (Bacillus amyloliquefaciens subsp. plantarum).